The sequence spans 647 residues: Acetyl-coenzyme A synthetase (647 aa).

CoA-binding positions include 190-193 and Thr-310; that span reads RGGR. ATP-binding positions include 386 to 388, 410 to 415, Asp-499, and Arg-514; these read GEP and DTWWQT. Residue Ser-522 coordinates CoA. An ATP-binding site is contributed by Arg-525. Residues Val-536, His-538, and Val-541 each coordinate Mg(2+). Arg-583 serves as a coordination point for CoA. Lys-608 is modified (N6-acetyllysine).

It belongs to the ATP-dependent AMP-binding enzyme family. Mg(2+) is required as a cofactor. Acetylated. Deacetylation by the SIR2-homolog deacetylase activates the enzyme.

The enzyme catalyses acetate + ATP + CoA = acetyl-CoA + AMP + diphosphate. Its function is as follows. Catalyzes the conversion of acetate into acetyl-CoA (AcCoA), an essential intermediate at the junction of anabolic and catabolic pathways. AcsA undergoes a two-step reaction. In the first half reaction, AcsA combines acetate with ATP to form acetyl-adenylate (AcAMP) intermediate. In the second half reaction, it can then transfer the acetyl group from AcAMP to the sulfhydryl group of CoA, forming the product AcCoA. This Xylella fastidiosa (strain 9a5c) protein is Acetyl-coenzyme A synthetase.